A 1001-amino-acid polypeptide reads, in one-letter code: 26S proteasome non-ATPase regulatory subunit 1 homolog B (1001 aa).

The residue at position 2 (alanine 2) is an N-acetylalanine. A Glycyl lysine isopeptide (Lys-Gly) (interchain with G-Cter in ubiquitin) cross-link involves residue lysine 166. 10 PC repeats span residues 412–447 (SATA…GGSP), 452–485 (GALY…EVIQ), 487–521 (GACL…VAGE), 522–555 (AAGI…EKII), 557–590 (GLAL…IIRY), 591–626 (GGMY…DVRR), 627–659 (TAVL…PHVR), 661–695 (GAAL…FVRQ), 696–736 (GALI…DTMS), and 739–771 (GAIL…TAVI). Disordered stretches follow at residues 853-896 (AKKE…TVEK) and 954-1001 (SLTD…YASP). Over residues 854–863 (KKEAEQKAKA) the composition is skewed to basic and acidic residues. At serine 889 the chain carries Phosphoserine. Residues 961–985 (STASPAVGAEAAGQAQQAATTSAMA) show a composition bias toward low complexity.

It belongs to the proteasome subunit S1 family. In terms of assembly, component of the 19S regulatory particle (RP/PA700) base subcomplex of the 26S proteasome. The 26S proteasome is composed of a core protease (CP), known as the 20S proteasome, capped at one or both ends by the 19S regulatory particle (RP/PA700). The RP/PA700 complex is composed of at least 17 different subunits in two subcomplexes, the base and the lid, which form the portions proximal and distal to the 20S proteolytic core, respectively.

Acts as a regulatory subunit of the 26 proteasome which is involved in the ATP-dependent degradation of ubiquitinated proteins. This is 26S proteasome non-ATPase regulatory subunit 1 homolog B (RPN2B) from Arabidopsis thaliana (Mouse-ear cress).